The primary structure comprises 213 residues: MSSLPALDLFLSKYQQAYVDQLGEQPRYYAQEQESDCVVGEMDSDGAVFWQGVVRDNPGQFENVESALELTLCPEINTFYGRHFSAPLFFDSKWGSGELIQVWNQTDFEYLQQNIIGHLMMKKKLKQEPTWFIGVLDDEDKMLTVNNADGSVWVEIPGELQSTKLAESLDEFISLLTPRVMPPVKPIEESMPELDHPGIWQRMKLMWNNLRGK.

It belongs to the Syd family.

The protein resides in the cell inner membrane. Interacts with the SecY protein in vivo. May bind preferentially to an uncomplexed state of SecY, thus functioning either as a chelating agent for excess SecY in the cell or as a regulatory factor that negatively controls the translocase function. The protein is Protein Syd of Shewanella pealeana (strain ATCC 700345 / ANG-SQ1).